The following is a 290-amino-acid chain: NAD kinase (290 aa).

The Proton acceptor role is filled by D75. NAD(+)-binding positions include 75–76 (DG), 148–149 (NE), D178, 189–194 (TAYNIS), and Q247.

This sequence belongs to the NAD kinase family. It depends on a divalent metal cation as a cofactor.

It localises to the cytoplasm. It carries out the reaction NAD(+) + ATP = ADP + NADP(+) + H(+). Functionally, involved in the regulation of the intracellular balance of NAD and NADP, and is a key enzyme in the biosynthesis of NADP. Catalyzes specifically the phosphorylation on 2'-hydroxyl of the adenosine moiety of NAD to yield NADP. This is NAD kinase from Wolinella succinogenes (strain ATCC 29543 / DSM 1740 / CCUG 13145 / JCM 31913 / LMG 7466 / NCTC 11488 / FDC 602W) (Vibrio succinogenes).